The primary structure comprises 713 residues: tRNA 5-methylaminomethyl-2-thiouridine biosynthesis bifunctional protein MnmC (713 aa).

The segment at 1 to 300 (MTAEPNKPCQ…MAAILSSATP (300 aa)) is tRNA (mnm(5)s(2)U34)-methyltransferase. The tract at residues 306–713 (IGGGLASAHL…LRKLLKGKAL (408 aa)) is FAD-dependent cmnm(5)s(2)U34 oxidoreductase.

The protein in the N-terminal section; belongs to the methyltransferase superfamily. tRNA (mnm(5)s(2)U34)-methyltransferase family. In the C-terminal section; belongs to the DAO family. FAD serves as cofactor.

Its subcellular location is the cytoplasm. The catalysed reaction is 5-aminomethyl-2-thiouridine(34) in tRNA + S-adenosyl-L-methionine = 5-methylaminomethyl-2-thiouridine(34) in tRNA + S-adenosyl-L-homocysteine + H(+). Its function is as follows. Catalyzes the last two steps in the biosynthesis of 5-methylaminomethyl-2-thiouridine (mnm(5)s(2)U) at the wobble position (U34) in tRNA. Catalyzes the FAD-dependent demodification of cmnm(5)s(2)U34 to nm(5)s(2)U34, followed by the transfer of a methyl group from S-adenosyl-L-methionine to nm(5)s(2)U34, to form mnm(5)s(2)U34. This chain is tRNA 5-methylaminomethyl-2-thiouridine biosynthesis bifunctional protein MnmC, found in Shewanella baltica (strain OS155 / ATCC BAA-1091).